The chain runs to 353 residues: Nicotinate-nucleotide--dimethylbenzimidazole phosphoribosyltransferase (353 aa).

Glutamate 318 acts as the Proton acceptor in catalysis.

The protein belongs to the CobT family.

It carries out the reaction 5,6-dimethylbenzimidazole + nicotinate beta-D-ribonucleotide = alpha-ribazole 5'-phosphate + nicotinate + H(+). Its pathway is nucleoside biosynthesis; alpha-ribazole biosynthesis; alpha-ribazole from 5,6-dimethylbenzimidazole: step 1/2. Functionally, catalyzes the synthesis of alpha-ribazole-5'-phosphate from nicotinate mononucleotide (NAMN) and 5,6-dimethylbenzimidazole (DMB). The protein is Nicotinate-nucleotide--dimethylbenzimidazole phosphoribosyltransferase of Roseiflexus castenholzii (strain DSM 13941 / HLO8).